We begin with the raw amino-acid sequence, 200 residues long: uncharacterized protein (200 aa).

The signal sequence occupies residues 1–24; that stretch reads MAIDKLPLLLFLSILLCLNRPVLS. N-linked (GlcNAc...) asparagine glycans are attached at residues asparagine 44, asparagine 72, asparagine 99, asparagine 124, and asparagine 135. Serine 174 carries the GPI-anchor amidated serine lipid modification. A propeptide spans 175-200 (removed in mature form); the sequence is NGFTFGIGLVSYLVIFMYSSFCFFLF.

It belongs to the UPF0277 family.

It is found in the cell membrane. This is an uncharacterized protein from Arabidopsis thaliana (Mouse-ear cress).